Here is a 516-residue protein sequence, read N- to C-terminus: Probable inactive beta-glucosidase 14 (516 aa).

Residues Met1–Ala23 form the signal peptide. A beta-D-glucoside contacts are provided by residues Gln43, His145, and Asn190–Gln191. The N-linked (GlcNAc...) asparagine glycan is linked to Asn193. A disulfide bridge links Cys210 with Cys217. 2 N-linked (GlcNAc...) asparagine glycosylation sites follow: Asn221 and Asn270. Tyr334 lines the a beta-D-glucoside pocket. Cys342 and Cys347 are oxidised to a cystine. Residue Glu405 participates in a beta-D-glucoside binding. Residue Glu405 is the Nucleophile of the active site. N-linked (GlcNAc...) asparagine glycosylation is found at Asn415 and Asn423. A beta-D-glucoside is bound by residues Trp454, Glu461–Trp462, and Phe470.

This sequence belongs to the glycosyl hydrolase 1 family. As to expression, expressed in flowers and endosperm.

In Oryza sativa subsp. japonica (Rice), this protein is Probable inactive beta-glucosidase 14.